We begin with the raw amino-acid sequence, 257 residues long: Short-chain dehydrogenase reductase 3a (257 aa).

12-36 (IITGGASGIGAEAVRLFTDHGAKVV) is an NAD(+) binding site. Ser144 lines the substrate pocket. Tyr157 serves as the catalytic Proton acceptor.

Belongs to the short-chain dehydrogenases/reductases (SDR) family. As to expression, highly expressed in the radicle tip, lateral root primordia and tips, and the area surrounding the cotyledon hydathode of young seedlings.

Its function is as follows. Confers resistance to the incompatible pathogenic bacteria P.syringae pv. tomato DC3000 in a PR1-dependent manner. Seems not involved in abscisic acid (ABA) biosynthesis. The chain is Short-chain dehydrogenase reductase 3a (SDR3a) from Arabidopsis thaliana (Mouse-ear cress).